A 105-amino-acid chain; its full sequence is Flagellar transcriptional regulator FlhD (105 aa).

It belongs to the FlhD family. In terms of assembly, homodimer; disulfide-linked. Forms a heterohexamer composed of two FlhC and four FlhD subunits. Each FlhC binds a FlhD dimer, forming a heterotrimer, and a hexamer assembles by dimerization of two heterotrimers.

Its subcellular location is the cytoplasm. In terms of biological role, functions in complex with FlhC as a master transcriptional regulator that regulates transcription of several flagellar and non-flagellar operons by binding to their promoter region. Activates expression of class 2 flagellar genes, including fliA, which is a flagellum-specific sigma factor that turns on the class 3 genes. Also regulates genes whose products function in a variety of physiological pathways. The polypeptide is Flagellar transcriptional regulator FlhD (Cupriavidus pinatubonensis (strain JMP 134 / LMG 1197) (Cupriavidus necator (strain JMP 134))).